Reading from the N-terminus, the 744-residue chain is Protein pthb1 homolog (744 aa).

Basic and acidic residues predominate over residues 722–733; sequence EHSPKELPKIRE. A disordered region spans residues 722-744; it reads EHSPKELPKIREEEEEEEQQVTA. Over residues 734–744 the composition is skewed to acidic residues; that stretch reads EEEEEEQQVTA.

As to quaternary structure, part of BBSome complex, that contains bbs-1, bbs-2, bbs-4, bbs-5, osm-12, bbs-8/ttc-8 and bbs-9. Interacts with bbs-1.

In terms of biological role, component of the BBSome complex. The BBSome complex is thought to function as a coat complex required for sorting of specific membrane proteins to the primary cilia. The BBSome complex is required for ciliogenesis but is dispensable for centriolar satellite function. Required for proper BBSome complex assembly and its ciliary localization. Required for cilia biogenesis and both the assembly and movement of intraflagellar transport proteins along the ciliary axoneme. In ciliated sensory neurons, required for the sensation of nitric oxide and avoidance of NO-producing organisms like P.aeruginosa. The sequence is that of Protein pthb1 homolog from Caenorhabditis elegans.